The chain runs to 310 residues: ADP-L-glycero-D-manno-heptose-6-epimerase (310 aa).

NADP(+) contacts are provided by residues 10–11, 31–32, Lys-38, Lys-53, 75–79, and Asn-92; these read FI, DN, and EGACS. Catalysis depends on Tyr-140, which acts as the Proton acceptor. NADP(+) is bound at residue Lys-144. Asn-169 is a substrate binding site. Positions 170 and 178 each coordinate NADP(+). The active-site Proton acceptor is the Lys-178. Residues Ser-180, His-187, 201 to 204, and Arg-209 each bind substrate; that span reads FEGS. The residue at position 267 (Lys-267) is an N6-acetyllysine. Tyr-272 provides a ligand contact to substrate.

This sequence belongs to the NAD(P)-dependent epimerase/dehydratase family. HldD subfamily. In terms of assembly, homopentamer. NADP(+) serves as cofactor.

It catalyses the reaction ADP-D-glycero-beta-D-manno-heptose = ADP-L-glycero-beta-D-manno-heptose. The protein operates within nucleotide-sugar biosynthesis; ADP-L-glycero-beta-D-manno-heptose biosynthesis; ADP-L-glycero-beta-D-manno-heptose from D-glycero-beta-D-manno-heptose 7-phosphate: step 4/4. In terms of biological role, catalyzes the interconversion between ADP-D-glycero-beta-D-manno-heptose and ADP-L-glycero-beta-D-manno-heptose via an epimerization at carbon 6 of the heptose. This chain is ADP-L-glycero-D-manno-heptose-6-epimerase, found in Escherichia coli (strain ATCC 8739 / DSM 1576 / NBRC 3972 / NCIMB 8545 / WDCM 00012 / Crooks).